We begin with the raw amino-acid sequence, 257 residues long: 1-acyl-sn-glycerol-3-phosphate acyltransferase (257 aa).

The helical transmembrane segment at 10–30 (VLFYLLLSASAFVWGTLSFFI) threads the bilayer. The HXXXXD motif signature appears at 82 to 87 (HQSTWE). A helical membrane pass occupies residues 105–125 (ELLYVPFFGWALALLKPIAID).

It belongs to the 1-acyl-sn-glycerol-3-phosphate acyltransferase family.

The protein localises to the cell inner membrane. It catalyses the reaction a 1-acyl-sn-glycero-3-phosphate + an acyl-CoA = a 1,2-diacyl-sn-glycero-3-phosphate + CoA. The protein operates within phospholipid metabolism; CDP-diacylglycerol biosynthesis; CDP-diacylglycerol from sn-glycerol 3-phosphate: step 2/3. In terms of biological role, converts lysophosphatidic acid (LPA) into phosphatidic acid by incorporating acyl moiety at the 2 position. The sequence is that of 1-acyl-sn-glycerol-3-phosphate acyltransferase from Pseudomonas aeruginosa (strain ATCC 15692 / DSM 22644 / CIP 104116 / JCM 14847 / LMG 12228 / 1C / PRS 101 / PAO1).